Reading from the N-terminus, the 354-residue chain is Arginase-2, mitochondrial (354 aa).

A mitochondrion-targeting transit peptide spans 1 to 22 (MSYGSCVSRLLRTRVQSVLKKS). Mn(2+)-binding residues include His120, Asp143, His145, and Asp147. Residues 145 to 149 (HADIN), 156 to 158 (SGN), and Asp202 contribute to the substrate site. 2 residues coordinate Mn(2+): Asp251 and Asp253. Residues Thr265 and Glu296 each contribute to the substrate site. Positions 330 to 354 (GHTVYEQLPPPSSPHESENAERVRI) are disordered. The segment covering 344–354 (HESENAERVRI) has biased composition (basic and acidic residues).

Belongs to the arginase family. As to quaternary structure, homotrimer. Mn(2+) serves as cofactor.

Its subcellular location is the mitochondrion. The enzyme catalyses L-arginine + H2O = urea + L-ornithine. It participates in nitrogen metabolism; urea cycle; L-ornithine and urea from L-arginine: step 1/1. May play a role in the regulation of extra-urea cycle arginine metabolism and also in down-regulation of nitric oxide synthesis. Extrahepatic arginase functions to regulate L-arginine bioavailability to nitric oxid synthase (NOS). Arginine metabolism is a critical regulator of innate and adaptive immune responses. Seems to be involved in negative regulation of the survival capacity of activated T cells. May suppress inflammation-related signaling in asthmatic airway epithelium. May play a role in promoting prenatal immune suppression. Regulates RPS6KB1 signaling, which promotes endothelial cell senescence and inflammation and implicates NOS3/eNOS dysfunction. Can inhibit endothelial autophagy independently of its enzymatic activity implicating mTORC2 signaling. Involved in vascular smooth muscle cell senescence and apoptosis independently of its enzymatic activity. In Oryctolagus cuniculus (Rabbit), this protein is Arginase-2, mitochondrial (ARG2).